Reading from the N-terminus, the 322-residue chain is Putative UDP-N-acetylglucosamine--dolichyl-phosphate N-acetylglucosaminephosphotransferase (322 aa).

9 helical membrane-spanning segments follow: residues 5 to 25 (AILLPILISFFISYITTVWVI), 46 to 66 (IPLLGGIGIIAGFIAGSFSLL), 76 to 96 (IPAVILSSLLIAFLGLLDDIF), 102 to 122 (VRAFLPIFASVPLIVYSVGHS), 123 to 143 (IISIPFLGPINFGIFYYIIII), 160 to 180 (LNGLGVGMGIIMLSALAYIGL), 186 to 206 (TYQAGLIALSAIFSLSAFLIF), 222 to 242 (FIGALIGAIGIAGFMYTALAI), and 295 to 315 (YQVVIILWGMEAIFAVIAVIL).

This sequence belongs to the glycosyltransferase 4 family.

It localises to the cell membrane. The enzyme catalyses a di-trans,poly-cis-dolichyl phosphate + UDP-N-acetyl-alpha-D-glucosamine = an N-acetyl-alpha-D-glucosaminyl-diphospho-di-trans,poly-cis-dolichol + UMP. Inhibited by tunicamycin. This Saccharolobus solfataricus (strain ATCC 35092 / DSM 1617 / JCM 11322 / P2) (Sulfolobus solfataricus) protein is Putative UDP-N-acetylglucosamine--dolichyl-phosphate N-acetylglucosaminephosphotransferase (gnpTA).